Here is a 324-residue protein sequence, read N- to C-terminus: Glyoxylate/hydroxypyruvate reductase B (324 aa).

Residues arginine 237 and glutamate 266 contribute to the active site. Histidine 285 (proton donor) is an active-site residue.

It belongs to the D-isomer specific 2-hydroxyacid dehydrogenase family. GhrB subfamily. As to quaternary structure, homodimer.

The protein localises to the cytoplasm. The catalysed reaction is glycolate + NADP(+) = glyoxylate + NADPH + H(+). It catalyses the reaction (R)-glycerate + NAD(+) = 3-hydroxypyruvate + NADH + H(+). It carries out the reaction (R)-glycerate + NADP(+) = 3-hydroxypyruvate + NADPH + H(+). Its function is as follows. Catalyzes the NADPH-dependent reduction of glyoxylate and hydroxypyruvate into glycolate and glycerate, respectively. The sequence is that of Glyoxylate/hydroxypyruvate reductase B from Salmonella agona (strain SL483).